The chain runs to 72 residues: UPF0270 protein ESA_04379 (72 aa).

The protein belongs to the UPF0270 family.

This chain is UPF0270 protein ESA_04379, found in Cronobacter sakazakii (strain ATCC BAA-894) (Enterobacter sakazakii).